We begin with the raw amino-acid sequence, 198 residues long: MTEKDQSVNNEEFAEKEDNTAKDSNTDEQIEKTASEDDVQNDSSAVDDKEKEIQQLKEEVNEQEEKYLRLYAEFENYKRRIQNENQTLKTYQAQCVLTDILPTIDNIERALQIEGEDESFKSLQKGVQMVYESLLRALEENGLEKIEAVGQQFDPNFHQAVMQDEDDSFESNAVTQELQTGYKLKDRVLRPSMVKVNQ.

The tract at residues 1-58 (MTEKDQSVNNEEFAEKEDNTAKDSNTDEQIEKTASEDDVQNDSSAVDDKEKEIQQLKE) is disordered. Composition is skewed to basic and acidic residues over residues 16 to 35 (KEDN…KTAS) and 46 to 58 (VDDK…QLKE).

Belongs to the GrpE family. In terms of assembly, homodimer.

Its subcellular location is the cytoplasm. Participates actively in the response to hyperosmotic and heat shock by preventing the aggregation of stress-denatured proteins, in association with DnaK and GrpE. It is the nucleotide exchange factor for DnaK and may function as a thermosensor. Unfolded proteins bind initially to DnaJ; upon interaction with the DnaJ-bound protein, DnaK hydrolyzes its bound ATP, resulting in the formation of a stable complex. GrpE releases ADP from DnaK; ATP binding to DnaK triggers the release of the substrate protein, thus completing the reaction cycle. Several rounds of ATP-dependent interactions between DnaJ, DnaK and GrpE are required for fully efficient folding. This Staphylococcus carnosus (strain TM300) protein is Protein GrpE.